The primary structure comprises 183 residues: ATP synthase subunit b, chloroplastic (183 aa).

A helical transmembrane segment spans residues 25–45 (DILATNLINLTVVVGVLIFFG).

Belongs to the ATPase B chain family. In terms of assembly, F-type ATPases have 2 components, F(1) - the catalytic core - and F(0) - the membrane proton channel. F(1) has five subunits: alpha(3), beta(3), gamma(1), delta(1), epsilon(1). F(0) has four main subunits: a(1), b(1), b'(1) and c(10-14). The alpha and beta chains form an alternating ring which encloses part of the gamma chain. F(1) is attached to F(0) by a central stalk formed by the gamma and epsilon chains, while a peripheral stalk is formed by the delta, b and b' chains.

It localises to the plastid. The protein resides in the chloroplast thylakoid membrane. Functionally, f(1)F(0) ATP synthase produces ATP from ADP in the presence of a proton or sodium gradient. F-type ATPases consist of two structural domains, F(1) containing the extramembraneous catalytic core and F(0) containing the membrane proton channel, linked together by a central stalk and a peripheral stalk. During catalysis, ATP synthesis in the catalytic domain of F(1) is coupled via a rotary mechanism of the central stalk subunits to proton translocation. Component of the F(0) channel, it forms part of the peripheral stalk, linking F(1) to F(0). The chain is ATP synthase subunit b, chloroplastic from Zea mays (Maize).